A 484-amino-acid chain; its full sequence is Aspartyl/glutamyl-tRNA(Asn/Gln) amidotransferase subunit B (484 aa).

Belongs to the GatB/GatE family. GatB subfamily. As to quaternary structure, heterotrimer of A, B and C subunits.

The enzyme catalyses L-glutamyl-tRNA(Gln) + L-glutamine + ATP + H2O = L-glutaminyl-tRNA(Gln) + L-glutamate + ADP + phosphate + H(+). It catalyses the reaction L-aspartyl-tRNA(Asn) + L-glutamine + ATP + H2O = L-asparaginyl-tRNA(Asn) + L-glutamate + ADP + phosphate + 2 H(+). Allows the formation of correctly charged Asn-tRNA(Asn) or Gln-tRNA(Gln) through the transamidation of misacylated Asp-tRNA(Asn) or Glu-tRNA(Gln) in organisms which lack either or both of asparaginyl-tRNA or glutaminyl-tRNA synthetases. The reaction takes place in the presence of glutamine and ATP through an activated phospho-Asp-tRNA(Asn) or phospho-Glu-tRNA(Gln). The chain is Aspartyl/glutamyl-tRNA(Asn/Gln) amidotransferase subunit B from Dechloromonas aromatica (strain RCB).